The sequence spans 122 residues: Flagellar hook-basal body complex protein FliE (122 aa).

It belongs to the FliE family.

The protein resides in the bacterial flagellum basal body. This Marinobacter nauticus (strain ATCC 700491 / DSM 11845 / VT8) (Marinobacter aquaeolei) protein is Flagellar hook-basal body complex protein FliE.